Consider the following 521-residue polypeptide: Zinc finger CCCH domain-containing protein 45 (521 aa).

Disordered regions lie at residues T28–G60, T142–S185, and S296–P319. Polar residues predominate over residues N34 to S43. The span at E159 to S168 shows a compositional bias: low complexity. The segment covering V170–S185 has biased composition (polar residues). The segment at N469 to Y497 adopts a C3H1-type zinc-finger fold.

This Arabidopsis thaliana (Mouse-ear cress) protein is Zinc finger CCCH domain-containing protein 45.